Consider the following 131-residue polypeptide: Snaclec A13 (131 aa).

3 disulfides stabilise this stretch: cysteine 4–cysteine 15, cysteine 32–cysteine 125, and cysteine 100–cysteine 117. A C-type lectin domain is found at 11–126 (YEGHCYKVFN…CELAYHFICM (116 aa)).

It belongs to the snaclec family. Heterodimer; disulfide-linked. Expressed by the venom gland.

It localises to the secreted. Its function is as follows. Interferes with one step of hemostasis (modulation of platelet aggregation, or coagulation cascade, for example). This is Snaclec A13 from Macrovipera lebetinus (Levantine viper).